The following is a 130-amino-acid chain: Small ribosomal subunit protein uS9 (130 aa).

It belongs to the universal ribosomal protein uS9 family.

In Chromobacterium violaceum (strain ATCC 12472 / DSM 30191 / JCM 1249 / CCUG 213 / NBRC 12614 / NCIMB 9131 / NCTC 9757 / MK), this protein is Small ribosomal subunit protein uS9.